A 184-amino-acid polypeptide reads, in one-letter code: Oligoribonuclease (184 aa).

Residues 9–172 (LIWIDLEMTG…DDIRESIEEL (164 aa)) enclose the Exonuclease domain. Tyrosine 130 is an active-site residue.

Belongs to the oligoribonuclease family.

It localises to the cytoplasm. In terms of biological role, 3'-to-5' exoribonuclease specific for small oligoribonucleotides. This is Oligoribonuclease from Actinobacillus pleuropneumoniae serotype 5b (strain L20).